The following is a 271-amino-acid chain: Phosphoglycerate mutase-like protein (271 aa).

His22 functions as the Tele-phosphohistidine intermediate in the catalytic mechanism. The active-site Proton donor/acceptor is the Glu134. Residues 252 to 271 form a disordered region; the sequence is SAETTNYPGKVPEGLDNPSG.

It belongs to the phosphoglycerate mutase family. Expressed in the shoot apical meristem and meristematic zone of the root tips.

Its function is as follows. May play a role in carbohydrates metabolism. The protein is Phosphoglycerate mutase-like protein of Arabidopsis thaliana (Mouse-ear cress).